We begin with the raw amino-acid sequence, 152 residues long: Globin, minor (152 aa).

The Globin domain occupies 12-152; the sequence is VNNSYHKDLL…ALIAVVQAAL (141 aa). His104 is a heme b binding site.

It belongs to the globin family.

The chain is Globin, minor from Anadara trapezia (Sydney cockle).